We begin with the raw amino-acid sequence, 365 residues long: tRNA-specific 2-thiouridylase MnmA (365 aa).

ATP contacts are provided by residues 12-19 and M38; that span reads AMSGGVDS. The Nucleophile role is filled by C108. An intrachain disulfide couples C108 to C206. G132 provides a ligand contact to ATP. The segment at 156–158 is interaction with tRNA; that stretch reads KDQ. C206 (cysteine persulfide intermediate) is an active-site residue. The segment at 312–313 is interaction with tRNA; the sequence is RY.

Belongs to the MnmA/TRMU family.

The protein localises to the cytoplasm. The enzyme catalyses S-sulfanyl-L-cysteinyl-[protein] + uridine(34) in tRNA + AH2 + ATP = 2-thiouridine(34) in tRNA + L-cysteinyl-[protein] + A + AMP + diphosphate + H(+). Functionally, catalyzes the 2-thiolation of uridine at the wobble position (U34) of tRNA, leading to the formation of s(2)U34. The chain is tRNA-specific 2-thiouridylase MnmA from Carboxydothermus hydrogenoformans (strain ATCC BAA-161 / DSM 6008 / Z-2901).